The primary structure comprises 534 residues: Prolyl 4-hydroxylase subunit alpha-1 (534 aa).

The signal sequence occupies residues Met1 to Ala17. Asn113 is a glycosylation site (N-linked (GlcNAc...) asparagine). The stretch at Val205–His238 is one TPR repeat. Asn259 is a glycosylation site (N-linked (GlcNAc...) asparagine). Residues Thr411–Glu519 enclose the Fe2OG dioxygenase domain. Residues His429, Asp431, and His500 each coordinate Fe cation. Lys510 contributes to the 2-oxoglutarate binding site.

It belongs to the P4HA family. As to quaternary structure, heterotetramer of two alpha-1 chains and two beta chains (P4HB)(the beta chain is the multi-functional PDI), where P4HB plays the role of a structural subunit; this tetramer catalyzes the formation of 4-hydroxyproline in collagen. The cofactor is Fe(2+). Requires L-ascorbate as cofactor. In terms of tissue distribution, expressed in the heart, liver, skeletal muscle, kidney, placenta, lung and pancreas.

Its subcellular location is the endoplasmic reticulum lumen. The enzyme catalyses L-prolyl-[collagen] + 2-oxoglutarate + O2 = trans-4-hydroxy-L-prolyl-[collagen] + succinate + CO2. Its activity is regulated as follows. Inhibited by poly(L-proline). Its function is as follows. Catalyzes the post-translational formation of 4-hydroxyproline in -Xaa-Pro-Gly- sequences in collagens and other proteins. This chain is Prolyl 4-hydroxylase subunit alpha-1 (P4HA1), found in Homo sapiens (Human).